We begin with the raw amino-acid sequence, 597 residues long: Coronatine-insensitive protein homolog 1b (597 aa).

Positions 22–64 constitute an F-box domain; that stretch reads SIPEEALHLVLGYVDDPRDREAVSLVCRRWHRIDALTRKHVTV. Jasmonate-binding residues include Arg92, Arg353, Tyr391, Arg414, and Arg501.

Interacts with TIFY10C/JAZ8 in a coronatine-dependent manner. Interacts with TIFY3/JAZ1, TIFY6A/JAZ3, TIFY6B/JAZ4, TIFY10A/JAZ6, TIFY10B/JAZ7, TIFY11A/JAZ9, TIFY11B/JAZ10, TIFY11C/JAZ11 and TIFY11D/JAZ12 in a coronatine-dependent manner. As to expression, expressed in roots, shoots, leaf sheaths and leaf blades.

Its function is as follows. Involved in jasmonate (JA) signaling. Required for jasmonate signaling in plant defense responses. Can complement Arabidopsis coi1-1 mutant and restore jasmonate signaling. Component of SCF(COI1) E3 ubiquitin ligase complexes, which may mediate the ubiquitination and subsequent proteasomal degradation of target proteins, including TIFY/JAZ family. The polypeptide is Coronatine-insensitive protein homolog 1b (Oryza sativa subsp. japonica (Rice)).